We begin with the raw amino-acid sequence, 844 residues long: Beta-mannosidase B (844 aa).

Glutamate 432 (proton donor) is an active-site residue. Asparagine 723 is a glycosylation site (N-linked (GlcNAc...) asparagine).

It belongs to the glycosyl hydrolase 2 family. Beta-mannosidase B subfamily.

It carries out the reaction Hydrolysis of terminal, non-reducing beta-D-mannose residues in beta-D-mannosides.. The protein operates within glycan metabolism; N-glycan degradation. Its function is as follows. Exoglycosidase that cleaves the single beta-linked mannose residue from the non-reducing end of beta-mannosidic oligosaccharides of various complexity and length. Prefers mannobiose over mannotriose and has no activity against polymeric mannan. Is also severely restricted by galactosyl substitutions at the +1 subsite. This chain is Beta-mannosidase B (mndB), found in Aspergillus flavus (strain ATCC 200026 / FGSC A1120 / IAM 13836 / NRRL 3357 / JCM 12722 / SRRC 167).